Reading from the N-terminus, the 359-residue chain is Transcription factor MYB115 (359 aa).

Residues 1–17 (MYHQNLISSTPNQNSNP) are compositionally biased toward polar residues. Residues 1–21 (MYHQNLISSTPNQNSNPHDWD) are disordered. 2 consecutive HTH myb-type domains span residues 153–208 (KDII…RPNI) and 209–259 (KKND…RRLH). 2 DNA-binding regions (H-T-H motif) span residues 181 to 204 (WTSIAKMFQGRVGKQCRERWHNHL) and 232 to 255 (WTEIAKRLPGRSENIVKNHWNATK).

In terms of tissue distribution, accumulates in reproductive organs (e.g. flowers and siliques). Expressed at very low levels in vegetative organs.

It is found in the nucleus. In terms of biological role, transcription activator that recognizes the motif 5'-TAACGG-3' in the promoter of target genes. Promotes vegetative-to-embryonic transition and the formation of somatic embryos from root explants in a WUS-independent manner. Together with MYB118, activates the transcription of S-ACP-DES2/AAD2 and S-ACP-DES3/AAD3 thus promoting the biosynthesis of omega-7 monounsaturated fatty acid in seed endosperm. The chain is Transcription factor MYB115 from Arabidopsis thaliana (Mouse-ear cress).